The chain runs to 77 residues: NAD(P)H-quinone oxidoreductase subunit L (77 aa).

Transmembrane regions (helical) follow at residues 10-30 (LLIA…LPAG) and 48-68 (LVMY…SPFL).

This sequence belongs to the complex I NdhL subunit family. As to quaternary structure, NDH-1 can be composed of about 15 different subunits; different subcomplexes with different compositions have been identified which probably have different functions.

It is found in the cellular thylakoid membrane. The enzyme catalyses a plastoquinone + NADH + (n+1) H(+)(in) = a plastoquinol + NAD(+) + n H(+)(out). The catalysed reaction is a plastoquinone + NADPH + (n+1) H(+)(in) = a plastoquinol + NADP(+) + n H(+)(out). Its function is as follows. NDH-1 shuttles electrons from an unknown electron donor, via FMN and iron-sulfur (Fe-S) centers, to quinones in the respiratory and/or the photosynthetic chain. The immediate electron acceptor for the enzyme in this species is believed to be plastoquinone. Couples the redox reaction to proton translocation, and thus conserves the redox energy in a proton gradient. Cyanobacterial NDH-1 also plays a role in inorganic carbon-concentration. The sequence is that of NAD(P)H-quinone oxidoreductase subunit L from Picosynechococcus sp. (strain ATCC 27264 / PCC 7002 / PR-6) (Agmenellum quadruplicatum).